The following is a 131-amino-acid chain: Profilin-5 (131 aa).

A disulfide bridge links Cys13 with Cys115. The short motif at 81–97 is the Involved in PIP2 interaction element; that stretch reads AVIRGKKGAGGITVKKT. Phosphothreonine is present on Thr111.

It belongs to the profilin family. In terms of assembly, occurs in many kinds of cells as a complex with monomeric actin in a 1:1 ratio. Phosphorylated by MAP kinases.

Its subcellular location is the cytoplasm. The protein resides in the cytoskeleton. Functionally, binds to actin and affects the structure of the cytoskeleton. At high concentrations, profilin prevents the polymerization of actin, whereas it enhances it at low concentrations. This Corylus avellana (European hazel) protein is Profilin-5.